Consider the following 70-residue polypeptide: Large ribosomal subunit protein eL38 (70 aa).

It belongs to the eukaryotic ribosomal protein eL38 family.

This is Large ribosomal subunit protein eL38 (RpL38) from Julodis onopordi (Jewel beetle).